Reading from the N-terminus, the 779-residue chain is Guanyl-specific ribonuclease pgl-1 (779 aa).

An involved in dimerization region spans residues 203 to 464 (KLLLEGVKEQ…KRIIDALEKS (262 aa)). His-453 acts as the Proton acceptor in catalysis. 3 disordered regions span residues 563–596 (HEPQTATLVPPSPNEESMAAESISTDGWDSPTKS), 611–661 (RDAL…GDAT), and 718–779 (GRGG…GGNF). Over residues 584 to 595 (SISTDGWDSPTK) the composition is skewed to polar residues. Residues 612–626 (DALKPDSVNSHRSEE) are compositionally biased toward basic and acidic residues. Positions 699 to 772 (GGGGGSYGGR…GGDRGGRGGY (74 aa)) are RNA-binding RGG-box.

As to quaternary structure, homodimer. Interacts with pgl-2 and pgl-3; this association is not required for P-granule localization of either pgl-2 or pgl-3. Interacts with ife-1. Interacts with prmt-1; the interaction is direct. Interacts with nmad-1. Interacts with P granule components meg-1, meg-3 and meg-4. It depends on Does not require metal ions for catalytic activity. as a cofactor.

The protein localises to the cytoplasmic granule. It catalyses the reaction [RNA] containing guanosine + H2O = an [RNA fragment]-3'-guanosine-3'-phosphate + a 5'-hydroxy-ribonucleotide-3'-[RNA fragment].. Guanyl-specific endoribonuclease which cleaves the phosphodiester bond in single-stranded RNA between the 3'-guanylic residue and the 5'-OH residue of adjacent nucleotide, resulting in the formation of a corresponding 2',3'-cyclic phosphate intermediate. Essential role in male and female postembryonic germline development; maternally provided protein maintains a population of proliferating germ cells and zygotic expression is required for correct oogenesis. Together with the P-granule component pgl-3, is involved in the formation of P-granules. Together with pgl-3, probably recruits other granule components such as pos-1, mex-3 and glh-1 to P-granules. In addition, may act redundantly with pgl-3 to protect germ cells from excessive germline apoptosis during normal oogenesis and development of the two gonadal arms. This may in part be through regulating the localization of sir-2.1 which is involved in germ cell apoptosis. May protect somatic cells from excessive apoptosis during normal development. The sequence is that of Guanyl-specific ribonuclease pgl-1 from Caenorhabditis remanei (Caenorhabditis vulgaris).